A 165-amino-acid polypeptide reads, in one-letter code: MDSKNGINNSQKARRTPKDRHLKIGGRDRRIRIPPSVAPQLFRLTKELGFKTDGETVSWLLQNAEPAIFAATGHGVTTTSNEDIQPNRNFPSYTFNGDNISNNVFPCTVVNTGHRQMVFPVSTMTDHAPSTNYSTISDNYNSTFNGNATASDTTSAATTTATTTV.

Over residues 1-11 (MDSKNGINNSQ) the composition is skewed to polar residues. Disordered stretches follow at residues 1–21 (MDSK…KDRH) and 146–165 (GNAT…TTTV). Positions 12–21 (KARRTPKDRH) are enriched in basic residues. The TCP domain occupies 17–71 (PKDRHLKIGGRDRRIRIPPSVAPQLFRLTKELGFKTDGETVSWLLQNAEPAIFAA). The span at 148–165 (ATASDTTSAATTTATTTV) shows a compositional bias: low complexity.

Mostly in anther in young buds.

The protein localises to the nucleus. Functionally, required during early processes in pollen development. This is Transcription factor TCP16 (TCP16) from Arabidopsis thaliana (Mouse-ear cress).